A 337-amino-acid polypeptide reads, in one-letter code: 4-hydroxy-3-methylbut-2-enyl diphosphate reductase (337 aa).

Cysteine 25 contacts [4Fe-4S] cluster. Residues histidine 54 and histidine 87 each contribute to the (2E)-4-hydroxy-3-methylbut-2-enyl diphosphate site. Dimethylallyl diphosphate is bound by residues histidine 54 and histidine 87. Positions 54 and 87 each coordinate isopentenyl diphosphate. Cysteine 109 is a binding site for [4Fe-4S] cluster. Histidine 137 is a binding site for (2E)-4-hydroxy-3-methylbut-2-enyl diphosphate. Histidine 137 provides a ligand contact to dimethylallyl diphosphate. Histidine 137 contacts isopentenyl diphosphate. Glutamate 139 serves as the catalytic Proton donor. Threonine 177 is a binding site for (2E)-4-hydroxy-3-methylbut-2-enyl diphosphate. Position 207 (cysteine 207) interacts with [4Fe-4S] cluster. (2E)-4-hydroxy-3-methylbut-2-enyl diphosphate-binding residues include serine 235, serine 236, asparagine 237, and serine 280. Residues serine 235, serine 236, asparagine 237, and serine 280 each contribute to the dimethylallyl diphosphate site. Serine 235, serine 236, asparagine 237, and serine 280 together coordinate isopentenyl diphosphate.

This sequence belongs to the IspH family. The cofactor is [4Fe-4S] cluster.

It catalyses the reaction isopentenyl diphosphate + 2 oxidized [2Fe-2S]-[ferredoxin] + H2O = (2E)-4-hydroxy-3-methylbut-2-enyl diphosphate + 2 reduced [2Fe-2S]-[ferredoxin] + 2 H(+). The catalysed reaction is dimethylallyl diphosphate + 2 oxidized [2Fe-2S]-[ferredoxin] + H2O = (2E)-4-hydroxy-3-methylbut-2-enyl diphosphate + 2 reduced [2Fe-2S]-[ferredoxin] + 2 H(+). It functions in the pathway isoprenoid biosynthesis; dimethylallyl diphosphate biosynthesis; dimethylallyl diphosphate from (2E)-4-hydroxy-3-methylbutenyl diphosphate: step 1/1. It participates in isoprenoid biosynthesis; isopentenyl diphosphate biosynthesis via DXP pathway; isopentenyl diphosphate from 1-deoxy-D-xylulose 5-phosphate: step 6/6. Functionally, catalyzes the conversion of 1-hydroxy-2-methyl-2-(E)-butenyl 4-diphosphate (HMBPP) into a mixture of isopentenyl diphosphate (IPP) and dimethylallyl diphosphate (DMAPP). Acts in the terminal step of the DOXP/MEP pathway for isoprenoid precursor biosynthesis. This Leifsonia xyli subsp. xyli (strain CTCB07) protein is 4-hydroxy-3-methylbut-2-enyl diphosphate reductase.